Reading from the N-terminus, the 121-residue chain is Colipase-like protein 1 (121 aa).

A signal peptide spans 1–23 (MMLPQWLLLLFLLFFFLFLLTRG). 5 disulfide bridges follow: Cys-39/Cys-50, Cys-45/Cys-61, Cys-49/Cys-83, Cys-71/Cys-91, and Cys-85/Cys-107.

The protein belongs to the colipase family. In terms of tissue distribution, exclusively expressed in epididymis, in the corpus region.

The protein resides in the secreted. This Homo sapiens (Human) protein is Colipase-like protein 1 (CLPSL1).